The following is a 238-amino-acid chain: Laccase-S (238 aa).

Plastocyanin-like domains follow at residues 4 to 87 and 100 to 238; these read NVIA…YDPA and HTII…IARY. Residue asparagine 8 is glycosylated (N-linked (GlcNAc...) asparagine). Cu cation-binding residues include histidine 21, histidine 23, histidine 66, and histidine 68. A disulfide bridge connects residues cysteine 74 and cysteine 162. An N-linked (GlcNAc...) asparagine glycan is attached at asparagine 165.

The protein belongs to the multicopper oxidase family. As to quaternary structure, monomer. It depends on Cu cation as a cofactor.

It localises to the secreted. The catalysed reaction is 4 hydroquinone + O2 = 4 benzosemiquinone + 2 H2O. Its activity is regulated as follows. Activity is strongly promoted by toluene. Activity is promoted by magnesium, potassium, cadmium, zinc, nickel, sodium, lead and manganese ions. Completely inhibited by IAA (cysteine protease inhibitor), PMSF (serine protease inhibitor), DEP (histidine protease inhibitor) and NAI (tyrosine protease inhibitor). Inhibited by ethanol, acetone, SDS, and EDTA. Activity is strongly inhibited by mercury ions. Also inhibited by lithium, aluminum, calcium, barium and iron ions. In terms of biological role, lignin degradation and detoxification of lignin-derived products. Has activity towards 2,2'-azino-bis(3-ethylbenzothiazoline-6-sulfonic acid) (ABTS). This Trametes hirsuta (White-rot fungus) protein is Laccase-S.